The primary structure comprises 290 residues: 4-hydroxy-tetrahydrodipicolinate synthase (290 aa).

Pyruvate is bound at residue T44. Y132 acts as the Proton donor/acceptor in catalysis. Catalysis depends on K160, which acts as the Schiff-base intermediate with substrate. I202 serves as a coordination point for pyruvate.

Belongs to the DapA family. Homotetramer; dimer of dimers.

The protein localises to the cytoplasm. The enzyme catalyses L-aspartate 4-semialdehyde + pyruvate = (2S,4S)-4-hydroxy-2,3,4,5-tetrahydrodipicolinate + H2O + H(+). It participates in amino-acid biosynthesis; L-lysine biosynthesis via DAP pathway; (S)-tetrahydrodipicolinate from L-aspartate: step 3/4. Catalyzes the condensation of (S)-aspartate-beta-semialdehyde [(S)-ASA] and pyruvate to 4-hydroxy-tetrahydrodipicolinate (HTPA). The protein is 4-hydroxy-tetrahydrodipicolinate synthase of Pelobacter propionicus (strain DSM 2379 / NBRC 103807 / OttBd1).